Reading from the N-terminus, the 149-residue chain is Ribonuclease P protein component (149 aa).

The interval 123-149 is disordered; sequence GTKVSRRSNGALHDAAPSSQPDPTVSG. Over residues 139–149 the composition is skewed to polar residues; the sequence is PSSQPDPTVSG.

It belongs to the RnpA family. As to quaternary structure, consists of a catalytic RNA component (M1 or rnpB) and a protein subunit.

The catalysed reaction is Endonucleolytic cleavage of RNA, removing 5'-extranucleotides from tRNA precursor.. RNaseP catalyzes the removal of the 5'-leader sequence from pre-tRNA to produce the mature 5'-terminus. It can also cleave other RNA substrates such as 4.5S RNA. The protein component plays an auxiliary but essential role in vivo by binding to the 5'-leader sequence and broadening the substrate specificity of the ribozyme. This Caulobacter vibrioides (strain ATCC 19089 / CIP 103742 / CB 15) (Caulobacter crescentus) protein is Ribonuclease P protein component.